Reading from the N-terminus, the 360-residue chain is Farnesyl pyrophosphate synthase (360 aa).

Isopentenyl diphosphate is bound by residues Lys52, Arg55, and Gln90. Positions 97 and 101 each coordinate Mg(2+). Residue Arg106 coordinates dimethylallyl diphosphate. Isopentenyl diphosphate is bound at residue Arg107. Dimethylallyl diphosphate contacts are provided by Lys194, Thr195, Gln237, Lys254, and Lys263.

It belongs to the FPP/GGPP synthase family. The cofactor is Mg(2+).

It catalyses the reaction isopentenyl diphosphate + dimethylallyl diphosphate = (2E)-geranyl diphosphate + diphosphate. It carries out the reaction isopentenyl diphosphate + (2E)-geranyl diphosphate = (2E,6E)-farnesyl diphosphate + diphosphate. It functions in the pathway isoprenoid biosynthesis; farnesyl diphosphate biosynthesis; farnesyl diphosphate from geranyl diphosphate and isopentenyl diphosphate: step 1/1. It participates in isoprenoid biosynthesis; geranyl diphosphate biosynthesis; geranyl diphosphate from dimethylallyl diphosphate and isopentenyl diphosphate: step 1/1. In terms of biological role, farnesyl pyrophosphate synthase; part of the second module of ergosterol biosynthesis pathway that includes the middle steps of the pathway. The second module involves the formation of farnesyl diphosphate, which is also an important intermediate in the biosynthesis of ubiquinone, dolichol, heme and prenylated proteins. This module also plays a key role in the biosynthesis of triterpenes such as ganoderic acids (GA), a group of highly oxygenated lanostane-type triterpenoids which are well recognized as a main group of unique bioactive compounds in the medicinal mushroom Ganoderma lucidum. Activity by the mevalonate kinase first converts mevalonate into 5-phosphomevalonate. 5-phosphomevalonate is then further converted to 5-diphosphomevalonate by the phosphomevalonate kinase. The diphosphomevalonate decarboxylase MVD then produces isopentenyl diphosphate. The isopentenyl-diphosphate delta-isomerase then catalyzes the 1,3-allylic rearrangement of the homoallylic substrate isopentenyl (IPP) to its highly electrophilic allylic isomer, dimethylallyl diphosphate (DMAPP). Finally the farnesyl diphosphate synthase FPS catalyzes the sequential condensation of isopentenyl pyrophosphate with dimethylallyl pyrophosphate, and then with the resultant geranylpyrophosphate to the ultimate product farnesyl pyrophosphate. The chain is Farnesyl pyrophosphate synthase from Ganoderma lucidum (Ling zhi medicinal fungus).